A 126-amino-acid polypeptide reads, in one-letter code: Desulfoferrodoxin (126 aa).

Cys10, Cys13, Cys29, Cys30, His49, His69, His75, Cys116, and His119 together coordinate Fe cation.

It belongs to the desulfoferrodoxin family. As to quaternary structure, homodimer. The cofactor is Fe(3+). It depends on Cu(2+) as a cofactor.

It catalyses the reaction reduced [rubredoxin] + superoxide + 2 H(+) = oxidized [rubredoxin] + H2O2. Catalyzes the one-electron reduction of superoxide anion radical to hydrogen peroxide at a nonheme ferrous iron center. Plays a fundamental role in case of oxidative stress via its superoxide detoxification activity. The chain is Desulfoferrodoxin (dfx) from Desulfarculus baarsii (strain ATCC 33931 / DSM 2075 / LMG 7858 / VKM B-1802 / 2st14).